We begin with the raw amino-acid sequence, 86 residues long: Large ribosomal subunit protein bL27 (86 aa).

Belongs to the bacterial ribosomal protein bL27 family.

This Cupriavidus metallidurans (strain ATCC 43123 / DSM 2839 / NBRC 102507 / CH34) (Ralstonia metallidurans) protein is Large ribosomal subunit protein bL27.